The sequence spans 111 residues: Large ribosomal subunit protein uL22 (111 aa).

Belongs to the universal ribosomal protein uL22 family. As to quaternary structure, part of the 50S ribosomal subunit.

In terms of biological role, this protein binds specifically to 23S rRNA; its binding is stimulated by other ribosomal proteins, e.g. L4, L17, and L20. It is important during the early stages of 50S assembly. It makes multiple contacts with different domains of the 23S rRNA in the assembled 50S subunit and ribosome. Functionally, the globular domain of the protein is located near the polypeptide exit tunnel on the outside of the subunit, while an extended beta-hairpin is found that lines the wall of the exit tunnel in the center of the 70S ribosome. This chain is Large ribosomal subunit protein uL22, found in Clostridium novyi (strain NT).